A 119-amino-acid polypeptide reads, in one-letter code: V-type proton ATPase subunit F (119 aa).

Belongs to the V-ATPase F subunit family. In terms of assembly, V-ATPase is a heteromultimeric enzyme composed of a peripheral catalytic V1 complex (components A to H) attached to an integral membrane V0 proton pore complex (components: a, c, c', c'', d, e, f and VOA1).

Its subcellular location is the vacuole membrane. Functionally, subunit of the V1 complex of vacuolar(H+)-ATPase (V-ATPase), a multisubunit enzyme composed of a peripheral complex (V1) that hydrolyzes ATP and a membrane integral complex (V0) that translocates protons. V-ATPase is responsible for acidifying and maintaining the pH of intracellular compartments. This is V-type proton ATPase subunit F (VMA7) from Vanderwaltozyma polyspora (strain ATCC 22028 / DSM 70294 / BCRC 21397 / CBS 2163 / NBRC 10782 / NRRL Y-8283 / UCD 57-17) (Kluyveromyces polysporus).